A 355-amino-acid chain; its full sequence is uncharacterized protein (355 aa).

The protein belongs to the 3-beta-HSD family.

This is an uncharacterized protein from Frog virus 3 (isolate Goorha) (FV-3).